A 794-amino-acid polypeptide reads, in one-letter code: Putative neurotrophin receptor LTRK 1 (794 aa).

An N-terminal signal peptide occupies residues 1–33 (MRGPRRFRLWTRANVLTVISILTSILSGAGCSP). Topologically, residues 34–419 (LSQLPSDNPA…PTEDFGPQTQ (386 aa)) are extracellular. Residues 36–102 (QLPSDNPAHV…DQVPGDASRN (67 aa)) form a disordered region. Asn-64, Asn-102, and Asn-128 each carry an N-linked (GlcNAc...) asparagine glycan. 2 LRR repeats span residues 181–202 (CLKH…AFKT) and 205–226 (SLET…LLRT). The region spanning 237 to 280 (NALTCSCTNLWLRSVDVAADRSEMTCSTRDGVSKMKMTQFKCEP) is the LRRCT domain. Asn-288 and Asn-374 each carry an N-linked (GlcNAc...) asparagine glycan. Residues 420 to 440 (VILPVVGVVILLISAVFIIYL) form a helical membrane-spanning segment. Topologically, residues 441-794 (CQRAKHRSHA…GDPVYIDIIA (354 aa)) are cytoplasmic. Positions 504 to 775 (ILLMRVIGEG…PQDRLTMKDI (272 aa)) constitute a Protein kinase domain. ATP-binding positions include 510-518 (IGEGAFGRV) and Lys-538. The Proton acceptor role is filled by Asp-647. Tyr-673, Tyr-677, Tyr-678, and Tyr-789 each carry phosphotyrosine; by autocatalysis.

The protein belongs to the protein kinase superfamily. Tyr protein kinase family. Insulin receptor subfamily. As to expression, expression is confined to the central nervous system and its associated endocrine tissues.

Its subcellular location is the membrane. It carries out the reaction L-tyrosyl-[protein] + ATP = O-phospho-L-tyrosyl-[protein] + ADP + H(+). Its function is as follows. May bind an endogenous invertebrate neurotrophin. Binds human NT-3, but not NGF or BDNF. The polypeptide is Putative neurotrophin receptor LTRK 1 (Lymnaea stagnalis (Great pond snail)).